The sequence spans 381 residues: NAD-dependent methanol dehydrogenase (381 aa).

The protein belongs to the iron-containing alcohol dehydrogenase family. As to quaternary structure, homodecamer. It depends on Mg(2+) as a cofactor. Zn(2+) is required as a cofactor.

Its subcellular location is the cytoplasm. The catalysed reaction is methanol + NAD(+) = formaldehyde + NADH + H(+). It functions in the pathway one-carbon metabolism; methanol degradation; formaldehyde from methanol: step 1/1. Its activity is regulated as follows. Stimulated by the activator protein Act which requires the presence of magnesium ions. Inhibited by 1,10-phenanthroline. Catalyzes the oxidation of methanol to yield formaldehyde. It possesses a NADH-dependent formaldehyde reductase activity and cannot use NADP. The protein is NAD-dependent methanol dehydrogenase of Bacillus methanolicus.